A 148-amino-acid chain; its full sequence is Ribosome maturation factor RimP (148 aa).

Belongs to the RimP family.

Its subcellular location is the cytoplasm. Functionally, required for maturation of 30S ribosomal subunits. This is Ribosome maturation factor RimP from Thermosipho africanus (strain TCF52B).